The primary structure comprises 320 residues: Lipoyl synthase (320 aa).

A compositionally biased stretch (basic and acidic residues) spans 1 to 24; that stretch reads MIGKLVRDLKIPDQRHPEKAHRPD. The segment at 1 to 30 is disordered; it reads MIGKLVRDLKIPDQRHPEKAHRPDNVQPKK. [4Fe-4S] cluster-binding residues include Cys60, Cys65, Cys71, Cys86, Cys90, Cys93, and Ser300. One can recognise a Radical SAM core domain in the interval 72 to 289; the sequence is WSQGHATMMI…EKAAYGKGFL (218 aa).

This sequence belongs to the radical SAM superfamily. Lipoyl synthase family. Requires [4Fe-4S] cluster as cofactor.

It localises to the cytoplasm. The enzyme catalyses [[Fe-S] cluster scaffold protein carrying a second [4Fe-4S](2+) cluster] + N(6)-octanoyl-L-lysyl-[protein] + 2 oxidized [2Fe-2S]-[ferredoxin] + 2 S-adenosyl-L-methionine + 4 H(+) = [[Fe-S] cluster scaffold protein] + N(6)-[(R)-dihydrolipoyl]-L-lysyl-[protein] + 4 Fe(3+) + 2 hydrogen sulfide + 2 5'-deoxyadenosine + 2 L-methionine + 2 reduced [2Fe-2S]-[ferredoxin]. Its pathway is protein modification; protein lipoylation via endogenous pathway; protein N(6)-(lipoyl)lysine from octanoyl-[acyl-carrier-protein]: step 2/2. Its function is as follows. Catalyzes the radical-mediated insertion of two sulfur atoms into the C-6 and C-8 positions of the octanoyl moiety bound to the lipoyl domains of lipoate-dependent enzymes, thereby converting the octanoylated domains into lipoylated derivatives. The protein is Lipoyl synthase of Cereibacter sphaeroides (strain ATCC 17029 / ATH 2.4.9) (Rhodobacter sphaeroides).